The sequence spans 558 residues: MARVEL domain-containing protein 2 (558 aa).

The span at 1–16 shows a compositional bias: basic and acidic residues; that stretch reads MSNDGRSRNRDRRYDE. 2 disordered regions span residues 1-58 and 115-145; these read MSND…PPFG and CSPP…GTFS. At 1–194 the chain is on the cytoplasmic side; that stretch reads MSNDGRSRNR…YMKSWAGLLR (194 aa). Residues 45-58 are compositionally biased toward pro residues; it reads PLPPPPLPLQPPFG. 3 positions are modified to phosphoserine: serine 116, serine 120, and serine 161. Residue threonine 166 is modified to Phosphothreonine. Positions 188-367 constitute an MARVEL domain; it reads SWAGLLRILG…SALVCLKLWR (180 aa). A helical transmembrane segment spans residues 195–215; that stretch reads ILGVVELLLGAGVFACVTAYI. Residues 216–223 are Extracellular-facing; that stretch reads HKDSEWYN. A helical membrane pass occupies residues 224–244; the sequence is LFGYSQPYGMGGVGGLGSMYG. The Cytoplasmic segment spans residues 245 to 254; the sequence is GYYYTGPKTP. A helical transmembrane segment spans residues 255 to 275; it reads FVLVVAGLAWITTIIILVLGM. The Extracellular portion of the chain corresponds to 276-291; it reads SMYYRTILLDSNWWPL. A helical transmembrane segment spans residues 292–312; it reads TEFGINVALFILYMAAAIVYV. The Cytoplasmic segment spans residues 313–319; that stretch reads NDTNRGG. Residues 320–337 traverse the membrane as a helical segment; that stretch reads LCYYPLFNTPVNAVFCRV. Topologically, residues 338-341 are extracellular; that stretch reads EGGQ. A helical transmembrane segment spans residues 342–362; that stretch reads IAAMIFLFVTMIVYLISALVC. Residues 363–558 lie on the Cytoplasmic side of the membrane; that stretch reads LKLWRHEAAR…VMNWDVQGYS (196 aa). Serine 387 is modified (phosphoserine). A Glycyl lysine isopeptide (Lys-Gly) (interchain with G-Cter in ubiquitin) cross-link involves residue lysine 412. Positions 439-548 form a coiled coil; the sequence is MPDYVAKYPV…IKQRIQEYDK (110 aa). The 112-residue stretch at 440–551 folds into the OCEL domain; the sequence is PDYVAKYPVI…RIQEYDKVMN (112 aa).

Belongs to the ELL/occludin family. Interacts with TJP1. Interacts with the ubiquitin ligase ITCH. Interacts (via C-terminal cytoplasmic domain) with LSR (via the cytoplasmic domain), ILDR1 and ILDR2; the interaction is required to recruit MARVELD2 to tricellular contacts. Ubiquitinated by ITCH; but this ubiquitination does not lead to proteasomal degradation. Polyubiquitinated at Lys-412 via 'Lys-63'-linked ubiquitin chains; deubiquitinated by USP53. In terms of processing, phosphorylated.

It localises to the cell membrane. Its subcellular location is the cell junction. The protein localises to the tight junction. Its function is as follows. Plays a role in the formation of tricellular tight junctions and of epithelial barriers. Required for normal hearing via its role in the separation of the endolymphatic and perilymphatic spaces of the organ of Corti in the inner ear, and for normal survival of hair cells in the organ of Corti. The chain is MARVEL domain-containing protein 2 from Homo sapiens (Human).